The chain runs to 148 residues: Putative pre-16S rRNA nuclease (148 aa).

This sequence belongs to the YqgF nuclease family.

The protein resides in the cytoplasm. In terms of biological role, could be a nuclease involved in processing of the 5'-end of pre-16S rRNA. The sequence is that of Putative pre-16S rRNA nuclease from Chlamydia trachomatis serovar A (strain ATCC VR-571B / DSM 19440 / HAR-13).